The sequence spans 945 residues: Leucine--tRNA ligase (945 aa).

The 'HIGH' region motif lies at 66 to 77; the sequence is PYPSGTGLHVGH. The 'KMSKS' region signature appears at 716 to 720; that stretch reads KMGKS. Lys-719 lines the ATP pocket.

It belongs to the class-I aminoacyl-tRNA synthetase family.

The protein localises to the cytoplasm. The catalysed reaction is tRNA(Leu) + L-leucine + ATP = L-leucyl-tRNA(Leu) + AMP + diphosphate. This is Leucine--tRNA ligase from Rhodococcus jostii (strain RHA1).